A 227-amino-acid polypeptide reads, in one-letter code: Cytochrome c oxidase subunit 2 (227 aa).

At 1–14 (MAHAAQVGLQDATS) the chain is on the mitochondrial intermembrane side. Residues 15 to 45 (PIMEELVIFHDHALMIIFLICFLVLYALFLT) traverse the membrane as a helical segment. The Mitochondrial matrix segment spans residues 46–59 (LTTKLTNTSISDAQ). Residues 60–87 (EMETIWTILPAIILILIALPSLRILYLT) traverse the membrane as a helical segment. The Mitochondrial intermembrane segment spans residues 88-227 (DEINDPSFTI…IFEMGPVFTL (140 aa)). Cu cation contacts are provided by His-161, Cys-196, Glu-198, Cys-200, His-204, and Met-207. Position 198 (Glu-198) interacts with Mg(2+).

It belongs to the cytochrome c oxidase subunit 2 family. As to quaternary structure, component of the cytochrome c oxidase (complex IV, CIV), a multisubunit enzyme composed of 14 subunits. The complex is composed of a catalytic core of 3 subunits MT-CO1, MT-CO2 and MT-CO3, encoded in the mitochondrial DNA, and 11 supernumerary subunits COX4I, COX5A, COX5B, COX6A, COX6B, COX6C, COX7A, COX7B, COX7C, COX8 and NDUFA4, which are encoded in the nuclear genome. The complex exists as a monomer or a dimer and forms supercomplexes (SCs) in the inner mitochondrial membrane with NADH-ubiquinone oxidoreductase (complex I, CI) and ubiquinol-cytochrome c oxidoreductase (cytochrome b-c1 complex, complex III, CIII), resulting in different assemblies (supercomplex SCI(1)III(2)IV(1) and megacomplex MCI(2)III(2)IV(2)). Found in a complex with TMEM177, COA6, COX18, COX20, SCO1 and SCO2. Interacts with TMEM177 in a COX20-dependent manner. Interacts with COX20. Interacts with COX16. Requires Cu cation as cofactor.

It localises to the mitochondrion inner membrane. It carries out the reaction 4 Fe(II)-[cytochrome c] + O2 + 8 H(+)(in) = 4 Fe(III)-[cytochrome c] + 2 H2O + 4 H(+)(out). In terms of biological role, component of the cytochrome c oxidase, the last enzyme in the mitochondrial electron transport chain which drives oxidative phosphorylation. The respiratory chain contains 3 multisubunit complexes succinate dehydrogenase (complex II, CII), ubiquinol-cytochrome c oxidoreductase (cytochrome b-c1 complex, complex III, CIII) and cytochrome c oxidase (complex IV, CIV), that cooperate to transfer electrons derived from NADH and succinate to molecular oxygen, creating an electrochemical gradient over the inner membrane that drives transmembrane transport and the ATP synthase. Cytochrome c oxidase is the component of the respiratory chain that catalyzes the reduction of oxygen to water. Electrons originating from reduced cytochrome c in the intermembrane space (IMS) are transferred via the dinuclear copper A center (CU(A)) of subunit 2 and heme A of subunit 1 to the active site in subunit 1, a binuclear center (BNC) formed by heme A3 and copper B (CU(B)). The BNC reduces molecular oxygen to 2 water molecules using 4 electrons from cytochrome c in the IMS and 4 protons from the mitochondrial matrix. This Pongo abelii (Sumatran orangutan) protein is Cytochrome c oxidase subunit 2 (MT-CO2).